The following is a 368-amino-acid chain: Peptide chain release factor 2 (368 aa).

Q250 is modified (N5-methylglutamine).

It belongs to the prokaryotic/mitochondrial release factor family. Post-translationally, methylated by PrmC. Methylation increases the termination efficiency of RF2.

The protein localises to the cytoplasm. In terms of biological role, peptide chain release factor 2 directs the termination of translation in response to the peptide chain termination codons UGA and UAA. In Chlamydia trachomatis serovar L2b (strain UCH-1/proctitis), this protein is Peptide chain release factor 2.